The primary structure comprises 616 residues: Dihydroxy-acid dehydratase (616 aa).

Position 81 (Asp81) interacts with Mg(2+). Cys122 is a binding site for [2Fe-2S] cluster. Positions 123 and 124 each coordinate Mg(2+). An N6-carboxylysine modification is found at Lys124. Cys195 is a [2Fe-2S] cluster binding site. Position 491 (Glu491) interacts with Mg(2+). The Proton acceptor role is filled by Ser517.

Belongs to the IlvD/Edd family. Homodimer. The cofactor is [2Fe-2S] cluster. Mg(2+) serves as cofactor.

The catalysed reaction is (2R)-2,3-dihydroxy-3-methylbutanoate = 3-methyl-2-oxobutanoate + H2O. The enzyme catalyses (2R,3R)-2,3-dihydroxy-3-methylpentanoate = (S)-3-methyl-2-oxopentanoate + H2O. The protein operates within amino-acid biosynthesis; L-isoleucine biosynthesis; L-isoleucine from 2-oxobutanoate: step 3/4. Its pathway is amino-acid biosynthesis; L-valine biosynthesis; L-valine from pyruvate: step 3/4. In terms of biological role, functions in the biosynthesis of branched-chain amino acids. Catalyzes the dehydration of (2R,3R)-2,3-dihydroxy-3-methylpentanoate (2,3-dihydroxy-3-methylvalerate) into 2-oxo-3-methylpentanoate (2-oxo-3-methylvalerate) and of (2R)-2,3-dihydroxy-3-methylbutanoate (2,3-dihydroxyisovalerate) into 2-oxo-3-methylbutanoate (2-oxoisovalerate), the penultimate precursor to L-isoleucine and L-valine, respectively. The chain is Dihydroxy-acid dehydratase from Methylocella silvestris (strain DSM 15510 / CIP 108128 / LMG 27833 / NCIMB 13906 / BL2).